Reading from the N-terminus, the 60-residue chain is Cytotoxin 10 (60 aa).

Intrachain disulfides connect Cys3–Cys21, Cys14–Cys38, Cys42–Cys53, and Cys54–Cys59.

It belongs to the three-finger toxin family. Short-chain subfamily. Type IA cytotoxin sub-subfamily. In terms of assembly, monomer in solution; Homodimer and oligomer in the presence of negatively charged lipids forming a pore with a size ranging between 20 and 30 Angstroms. Expressed by the venom gland.

It localises to the secreted. It is found in the target cell membrane. Shows cytolytic activity on many different cells by forming pore in lipid membranes. In vivo, increases heart rate or kills the animal by cardiac arrest. In addition, it binds to heparin with high affinity, interacts with Kv channel-interacting protein 1 (KCNIP1) in a calcium-independent manner, and binds to integrin alpha-V/beta-3 (ITGAV/ITGB3) with moderate affinity. Has hemolytic activity towards human erythrocytes (EC(50)=0.162 uM) and cytolytic activity towards various cell lines. The sequence is that of Cytotoxin 10 from Naja naja (Indian cobra).